We begin with the raw amino-acid sequence, 311 residues long: Coproporphyrin III ferrochelatase 1 (311 aa).

Fe-coproporphyrin III contacts are provided by residues Tyr12, Arg29, 45–46 (RY), Ser53, and Tyr124. His182 and Glu263 together coordinate Fe(2+).

It belongs to the ferrochelatase family.

It is found in the cytoplasm. The enzyme catalyses Fe-coproporphyrin III + 2 H(+) = coproporphyrin III + Fe(2+). The protein operates within porphyrin-containing compound metabolism; protoheme biosynthesis. Its function is as follows. Involved in coproporphyrin-dependent heme b biosynthesis. Catalyzes the insertion of ferrous iron into coproporphyrin III to form Fe-coproporphyrin III. In Bacillus thuringiensis subsp. konkukian (strain 97-27), this protein is Coproporphyrin III ferrochelatase 1.